A 136-amino-acid chain; its full sequence is Protein NrdI (136 aa).

It belongs to the NrdI family.

Functionally, probably involved in ribonucleotide reductase function. The polypeptide is Protein NrdI (Salmonella paratyphi B (strain ATCC BAA-1250 / SPB7)).